A 277-amino-acid chain; its full sequence is MADPWQECMDYAVTLARQAGEIVREALKNEMNIMIKSSPADLVTATDEKVEKMLISSIKEKYPSHSFIGEESVAAGEKSVLTDNPTWIIDPIDGTTNFVHGFPFVAVSIGFVVNKGMEFGVVYSCMEDKMYTGRKGRGAFCDGQKLQVSPQKDVTNSLLVTELGSSRTPETVRIILSNMERLLCIPIHGIRGVGTAALNMCFVAAGVADAFYEMGIHCWDMAGAGIIVTEAGGVLMDITGGPFDLMSRRVIASSNKALGERIAKEIQIIPLQRDDED.

Mg(2+) contacts are provided by glutamate 70, aspartate 90, isoleucine 92, and aspartate 93. Residue glutamate 70 participates in substrate binding. 92-95 (IDGT) serves as a coordination point for substrate. Threonine 168 carries the post-translational modification Phosphothreonine. Substrate contacts are provided by residues 194-196 (GTA), glutamate 213, and aspartate 220. Residue aspartate 220 coordinates Mg(2+).

This sequence belongs to the inositol monophosphatase superfamily. In terms of assembly, homodimer. Requires Mg(2+) as cofactor.

The protein resides in the cytoplasm. The catalysed reaction is a myo-inositol phosphate + H2O = myo-inositol + phosphate. It carries out the reaction 1D-myo-inositol 1-phosphate + H2O = myo-inositol + phosphate. It catalyses the reaction 1D-myo-inositol 2-phosphate + H2O = myo-inositol + phosphate. The enzyme catalyses 1D-myo-inositol 3-phosphate + H2O = myo-inositol + phosphate. The catalysed reaction is 1D-myo-inositol 4-phosphate + H2O = myo-inositol + phosphate. It carries out the reaction 1D-myo-inositol 5-phosphate + H2O = myo-inositol + phosphate. It catalyses the reaction 1D-myo-inositol 6-phosphate + H2O = myo-inositol + phosphate. The enzyme catalyses scyllo-inositol 1-phosphate + H2O = scyllo-inositol + phosphate. The catalysed reaction is alpha-D-galactose 1-phosphate + H2O = D-galactose + phosphate. It carries out the reaction alpha-D-glucose 1-phosphate + H2O = D-glucose + phosphate. It catalyses the reaction D-glucose 6-phosphate + H2O = D-glucose + phosphate. The enzyme catalyses beta-D-fructose 1-phosphate + H2O = D-fructose + phosphate. The catalysed reaction is glycerol 2-phosphate + H2O = glycerol + phosphate. It carries out the reaction adenosine 2'-phosphate + H2O = adenosine + phosphate. It functions in the pathway polyol metabolism; myo-inositol biosynthesis; myo-inositol from D-glucose 6-phosphate: step 2/2. With respect to regulation, inhibited by Li(+), Ca(2+) and Mn(2+), but also by Mg(2+) at concentrations above 3 mM. Phosphatase involved in the dephosphorylation of myo-inositol monophosphate to generate myo-inositol. Is also able to dephosphorylate scyllo-inositol-phosphate, myo-inositol 1,4-diphosphate, scyllo-inositol-1,3-diphosphate and scyllo-inositol-1,4-diphosphate. Also dephosphorylates in vitro other sugar-phosphates including D-galactose-1-phosphate, glucose-1-phosphate, glucose-6-phosphate, fructose-1-phosphate, beta-glycerophosphate and 2'-AMP. Responsible for the provision of inositol required for synthesis of phosphatidylinositol and polyphosphoinositides, and involved in maintaining normal brain function. Has been implicated as the pharmacological target for lithium Li(+) action in brain. This is Inositol monophosphatase 1 (IMPA1) from Sus scrofa (Pig).